We begin with the raw amino-acid sequence, 187 residues long: Large ribosomal subunit protein uL5 (187 aa).

This sequence belongs to the universal ribosomal protein uL5 family. Part of the 50S ribosomal subunit; part of the 5S rRNA/L5/L18/L25 subcomplex. Contacts the 5S rRNA and the P site tRNA. Forms a bridge to the 30S subunit in the 70S ribosome.

Its function is as follows. This is one of the proteins that bind and probably mediate the attachment of the 5S RNA into the large ribosomal subunit, where it forms part of the central protuberance. In the 70S ribosome it contacts protein S13 of the 30S subunit (bridge B1b), connecting the 2 subunits; this bridge is implicated in subunit movement. Contacts the P site tRNA; the 5S rRNA and some of its associated proteins might help stabilize positioning of ribosome-bound tRNAs. The sequence is that of Large ribosomal subunit protein uL5 from Mycobacteroides abscessus (strain ATCC 19977 / DSM 44196 / CCUG 20993 / CIP 104536 / JCM 13569 / NCTC 13031 / TMC 1543 / L948) (Mycobacterium abscessus).